A 140-amino-acid polypeptide reads, in one-letter code: Con-Ins Im2 (140 aa).

The N-terminal stretch at 1–29 is a signal peptide; that stretch reads MALTWPSSPPVLLTLLLSLLALQLCAVYG. 4 disulfides stabilise this stretch: cysteine 35/cysteine 123, cysteine 50/cysteine 126, cysteine 62/cysteine 139, and cysteine 125/cysteine 130. Positions 64–110 are cleaved as a propeptide — c peptide; the sequence is PRGYVSNWFTKRSAPNKPAETFVDQNLRGVLLNKREALSYLRPREPR. At glutamate 134 the chain carries 4-carboxyglutamate; partial.

It belongs to the insulin family. Heterodimer of A and B chains; disulfide-linked. Expressed by the venom gland.

The protein localises to the secreted. Its function is as follows. This venom insulin facilitates prey capture by rapidly inducing hypoglycemic shock. Intraperitoneal injection of this peptide into zebrafish lowers blood glucose with the same potency than human insulin. In vivo, when applied to water, this peptide reduces overall locomotor activity of zebrafish larvae, observed as a significant decrease in the percentage of time spent swimming and movement frequency. This is Con-Ins Im2 from Conus imperialis (Imperial cone).